The following is a 300-amino-acid chain: B1 kinase (300 aa).

The region spanning 16-282 (WVVGPLIGKG…ITMVNSLTYF (267 aa)) is the Protein kinase domain. Residues 22 to 30 (IGKGGFGSI) and lysine 45 each bind ATP. The active-site Proton acceptor is aspartate 147.

It belongs to the protein kinase superfamily. Ser/Thr protein kinase family. Poxviruses subfamily. In terms of assembly, interacts with host JIP1; this interaction increases the amount of MAPK bound to JIP1 and subsequently increases the activity of transcription factors, such as JUN, that respond to these complexes. Interacts with protein OPG198; this interaction inhibits the repressive activity of OPG198 pseudokinase on viral replication factory formation. Mg(2+) is required as a cofactor. In terms of processing, autophosphorylated.

Its subcellular location is the virion. The protein localises to the host cytoplasm. It carries out the reaction L-seryl-[protein] + ATP = O-phospho-L-seryl-[protein] + ADP + H(+). It catalyses the reaction L-threonyl-[protein] + ATP = O-phospho-L-threonyl-[protein] + ADP + H(+). Its function is as follows. Essential serine/threonine-protein kinase that plays different role in the viral life cycle. Phosphorylates the host small ribosomal protein RACK1 thereby customizing the ribosomes to a state optimal for viral mRNAs (which contain poly-A leaders) but not for host mRNAs. Facilitates viral DNA replication by inhibiting host BANF1, a cellular host defense responsive to foreign DNA. Phosphorylates host BANF1 on serine and threonine residues; this leads to BANF1 relocalization to the cytoplasm, loss of dimerization and impaired DNA binding activity. Indeed, BANF1 activity depends on its DNA-binding property which is blocked by VPK1-mediated phosphorylation. Required for viral intermediate genes expression, probably by inhibiting host BANF1. Modulates cellular responses via host JUN by two different mechanisms, either by direct phosphorylation or by modulation of upstream JIP1-MAPK complexes. Seems to participate in the accumulation/processing of late proteins and thus in virion maturation. In addition, inhibits B12 repressive activity on viral DNA replication via a phosphorylation-dependent mechanism. The protein is B1 kinase (OPG187) of Bos taurus (Bovine).